The following is a 388-amino-acid chain: MHNANHPHGNGHPAEKKGMGAHSGAMNMPRTLEDGSPACRLIAWEVTRSCNLACKHCRAEAHTEPYPGELSTQEAKALIDTFPEVGNPIIIFTGGDPMMRADLYELIRYATGLGLRCVLSPNGTLITGQNAVQIREAGVQRCSISIDGPSAELHDEFRGVPGAFEQSMRGIEFLKQAGVEFQINTTVTRDNLPYFKDIFKLCENLGAAAWHIFLLVPTGRAAQLGAQVITAEEYEEVLNWFYDFRKTTSMHLKATCAPHYYRIMRQRAKEEGLPVTPDNFGMDAMTRGCLGGIGFCFISHTGQVQPCGYLELDCGNVRDTRFPEIWRKSEYFRQFRTPEEYDGKCGHCEYHNVCGGCRARGFTMSGSHMAEEPLCTYQPRKKPAADRK.

A compositionally biased stretch (low complexity) spans 1 to 12; sequence MHNANHPHGNGH. The interval 1–29 is disordered; the sequence is MHNANHPHGNGHPAEKKGMGAHSGAMNMP. Residues 34-257 enclose the Radical SAM core domain; sequence DGSPACRLIA…TSMHLKATCA (224 aa). The [4Fe-4S] cluster site is built by C50, C54, and C57.

It belongs to the radical SAM superfamily. [4Fe-4S] cluster is required as a cofactor.

It carries out the reaction Fe-coproporphyrin III + 2 S-adenosyl-L-methionine = heme b + 2 5'-deoxyadenosine + 2 L-methionine + 2 CO2. It functions in the pathway porphyrin-containing compound metabolism; protoheme biosynthesis. Involved in siroheme-dependent heme b biosynthesis. Catalyzes the conversion of Fe-coproporphyrin III into heme by the oxidative decarboxylation of two propionate side chains. In Oleidesulfovibrio alaskensis (strain ATCC BAA-1058 / DSM 17464 / G20) (Desulfovibrio alaskensis), this protein is AdoMet-dependent heme synthase.